We begin with the raw amino-acid sequence, 948 residues long: Bifunctional glutamine synthetase adenylyltransferase/adenylyl-removing enzyme (948 aa).

The segment at 1–445 is adenylyl removase; it reads MAPPPDTSGS…IFTEVIAEPP (445 aa). The segment at 451–948 is adenylyl transferase; sequence EPLLDGGEAE…WKQIIEAPVF (498 aa).

It belongs to the GlnE family. Mg(2+) is required as a cofactor.

It catalyses the reaction [glutamine synthetase]-O(4)-(5'-adenylyl)-L-tyrosine + phosphate = [glutamine synthetase]-L-tyrosine + ADP. It carries out the reaction [glutamine synthetase]-L-tyrosine + ATP = [glutamine synthetase]-O(4)-(5'-adenylyl)-L-tyrosine + diphosphate. Involved in the regulation of glutamine synthetase GlnA, a key enzyme in the process to assimilate ammonia. When cellular nitrogen levels are high, the C-terminal adenylyl transferase (AT) inactivates GlnA by covalent transfer of an adenylyl group from ATP to specific tyrosine residue of GlnA, thus reducing its activity. Conversely, when nitrogen levels are low, the N-terminal adenylyl removase (AR) activates GlnA by removing the adenylyl group by phosphorolysis, increasing its activity. The regulatory region of GlnE binds the signal transduction protein PII (GlnB) which indicates the nitrogen status of the cell. The protein is Bifunctional glutamine synthetase adenylyltransferase/adenylyl-removing enzyme of Methylococcus capsulatus (strain ATCC 33009 / NCIMB 11132 / Bath).